A 222-amino-acid polypeptide reads, in one-letter code: Deoxyribose-phosphate aldolase (222 aa).

Asp-93 (proton donor/acceptor) is an active-site residue. The active-site Schiff-base intermediate with acetaldehyde is Lys-156. Lys-186 (proton donor/acceptor) is an active-site residue.

This sequence belongs to the DeoC/FbaB aldolase family. DeoC type 1 subfamily.

It localises to the cytoplasm. The enzyme catalyses 2-deoxy-D-ribose 5-phosphate = D-glyceraldehyde 3-phosphate + acetaldehyde. It functions in the pathway carbohydrate degradation; 2-deoxy-D-ribose 1-phosphate degradation; D-glyceraldehyde 3-phosphate and acetaldehyde from 2-deoxy-alpha-D-ribose 1-phosphate: step 2/2. In terms of biological role, catalyzes a reversible aldol reaction between acetaldehyde and D-glyceraldehyde 3-phosphate to generate 2-deoxy-D-ribose 5-phosphate. The chain is Deoxyribose-phosphate aldolase from Nocardia farcinica (strain IFM 10152).